The sequence spans 319 residues: Tetrahydromethanopterin S-methyltransferase subunit H (319 aa).

It belongs to the MtrH family. In terms of assembly, the complex is composed of 8 subunits; MtrA, MtrB, MtrC, MtrD, MtrE, MtrF, MtrG and MtrH.

It catalyses the reaction 5-methyl-5,6,7,8-tetrahydromethanopterin + coenzyme M + 2 Na(+)(in) = 5,6,7,8-tetrahydromethanopterin + methyl-coenzyme M + 2 Na(+)(out). It participates in one-carbon metabolism; methanogenesis from CO(2); methyl-coenzyme M from 5,10-methylene-5,6,7,8-tetrahydromethanopterin: step 2/2. Its function is as follows. Part of a complex that catalyzes the formation of methyl-coenzyme M and tetrahydromethanopterin from coenzyme M and methyl-tetrahydromethanopterin. This is an energy-conserving, sodium-ion translocating step. MtrH catalyzes the transfer of the methyl group from methyl-tetrahydromethanopterin to the corrinoid prosthetic group of MtrA. This Methanocaldococcus jannaschii (strain ATCC 43067 / DSM 2661 / JAL-1 / JCM 10045 / NBRC 100440) (Methanococcus jannaschii) protein is Tetrahydromethanopterin S-methyltransferase subunit H.